A 363-amino-acid polypeptide reads, in one-letter code: Dihydroorotate dehydrogenase (quinone) (363 aa).

FMN is bound by residues 62–66 (AGFDK) and T86. K66 contacts substrate. Residue 111–115 (NRMGF) participates in substrate binding. Positions 142 and 175 each coordinate FMN. N175 lines the substrate pocket. S178 serves as the catalytic Nucleophile. Substrate is bound at residue N180. 2 residues coordinate FMN: K216 and T244. 245 to 246 (NT) is a substrate binding site. Residues G267, G296, and 317-318 (YT) each bind FMN.

It belongs to the dihydroorotate dehydrogenase family. Type 2 subfamily. In terms of assembly, monomer. Requires FMN as cofactor.

It is found in the cell membrane. It catalyses the reaction (S)-dihydroorotate + a quinone = orotate + a quinol. It functions in the pathway pyrimidine metabolism; UMP biosynthesis via de novo pathway; orotate from (S)-dihydroorotate (quinone route): step 1/1. Catalyzes the conversion of dihydroorotate to orotate with quinone as electron acceptor. This is Dihydroorotate dehydrogenase (quinone) from Anaeromyxobacter sp. (strain Fw109-5).